The chain runs to 113 residues: Large ribosomal subunit protein bL19 (113 aa).

It belongs to the bacterial ribosomal protein bL19 family.

In terms of biological role, this protein is located at the 30S-50S ribosomal subunit interface and may play a role in the structure and function of the aminoacyl-tRNA binding site. This chain is Large ribosomal subunit protein bL19, found in Rhodococcus erythropolis (strain PR4 / NBRC 100887).